The chain runs to 508 residues: Anthranilate synthase component 1 (508 aa).

Residues serine 51 and 283–285 (PYM) contribute to the L-tryptophan site. 323 to 324 (GT) lines the chorismate pocket. Glutamate 350 provides a ligand contact to Mg(2+). Chorismate is bound by residues tyrosine 438, arginine 458, 477-479 (GAG), and glycine 479. Glutamate 492 lines the Mg(2+) pocket.

The protein belongs to the anthranilate synthase component I family. In terms of assembly, heterotetramer consisting of two non-identical subunits: a beta subunit (TrpG) and a large alpha subunit (TrpE). Mg(2+) serves as cofactor.

It carries out the reaction chorismate + L-glutamine = anthranilate + pyruvate + L-glutamate + H(+). It participates in amino-acid biosynthesis; L-tryptophan biosynthesis; L-tryptophan from chorismate: step 1/5. With respect to regulation, feedback inhibited by tryptophan. Functionally, part of a heterotetrameric complex that catalyzes the two-step biosynthesis of anthranilate, an intermediate in the biosynthesis of L-tryptophan. In the first step, the glutamine-binding beta subunit (TrpG) of anthranilate synthase (AS) provides the glutamine amidotransferase activity which generates ammonia as a substrate that, along with chorismate, is used in the second step, catalyzed by the large alpha subunit of AS (TrpE) to produce anthranilate. In the absence of TrpG, TrpE can synthesize anthranilate directly from chorismate and high concentrations of ammonia. The polypeptide is Anthranilate synthase component 1 (trpE) (Synechocystis sp. (strain ATCC 27184 / PCC 6803 / Kazusa)).